The chain runs to 638 residues: Threonine--tRNA ligase (638 aa).

Residues 1–59 enclose the TGS domain; it reads MEKIKVKIKGKEYEVEKGTPLGKIFELAGIKDALGGVINGKIIDLQTPVRESGEIKPVY. Positions 243-536 are catalytic; that stretch reads DHRRLGKELE…LLEHYAGLLP (294 aa). Zn(2+) is bound by residues cysteine 336, histidine 387, and histidine 513.

The protein belongs to the class-II aminoacyl-tRNA synthetase family. As to quaternary structure, homodimer. The cofactor is Zn(2+).

It localises to the cytoplasm. It catalyses the reaction tRNA(Thr) + L-threonine + ATP = L-threonyl-tRNA(Thr) + AMP + diphosphate + H(+). Its function is as follows. Catalyzes the attachment of threonine to tRNA(Thr) in a two-step reaction: L-threonine is first activated by ATP to form Thr-AMP and then transferred to the acceptor end of tRNA(Thr). Also edits incorrectly charged L-seryl-tRNA(Thr). The chain is Threonine--tRNA ligase from Aquifex aeolicus (strain VF5).